A 167-amino-acid chain; its full sequence is ATP synthase subunit delta, mitochondrial (167 aa).

The transit peptide at 1–28 (MFRLSNYMLRKSQFPQGLVRAPFGIRGY) directs the protein to the mitochondrion.

This sequence belongs to the ATPase epsilon chain family. As to quaternary structure, F-type ATPases have 2 components, CF(1) - the catalytic core - and CF(0) - the membrane proton channel. CF(1) has five subunits: alpha(3), beta(3), gamma(1), delta(1), epsilon(1). CF(0) has three main subunits: a, b and c.

It localises to the mitochondrion. The protein resides in the mitochondrion inner membrane. Mitochondrial membrane ATP synthase (F(1)F(0) ATP synthase or Complex V) produces ATP from ADP in the presence of a proton gradient across the membrane which is generated by electron transport complexes of the respiratory chain. F-type ATPases consist of two structural domains, F(1) - containing the extramembraneous catalytic core, and F(0) - containing the membrane proton channel, linked together by a central stalk and a peripheral stalk. During catalysis, ATP turnover in the catalytic domain of F(1) is coupled via a rotary mechanism of the central stalk subunits to proton translocation. Part of the complex F(1) domain and of the central stalk which is part of the complex rotary element. Rotation of the central stalk against the surrounding alpha(3)beta(3) subunits leads to hydrolysis of ATP in three separate catalytic sites on the beta subunits. The sequence is that of ATP synthase subunit delta, mitochondrial (atp16) from Schizosaccharomyces pombe (strain 972 / ATCC 24843) (Fission yeast).